We begin with the raw amino-acid sequence, 603 residues long: Laccase 1 (603 aa).

The N-terminal stretch at 1–20 (MSRFARLLLIVALFFTNAWA) is a signal peptide. Plastocyanin-like domains lie at 66-108 (QRPI…IHIR) and 159-349 (LVVS…MRIP). Cu cation-binding residues include histidine 90 and histidine 92. 4 N-linked (GlcNAc...) asparagine glycosylation sites follow: asparagine 246, asparagine 269, asparagine 434, and asparagine 474. The region spanning 460–588 (TRDTENDGLV…GGMGIAILDG (129 aa)) is the Plastocyanin-like 3 domain. Residues histidine 496, histidine 499, and histidine 501 each coordinate Cu cation. An N-linked (GlcNAc...) asparagine glycan is attached at asparagine 516. Residues histidine 570, cysteine 571, histidine 572, and histidine 576 each contribute to the Cu cation site.

Belongs to the multicopper oxidase family. Cu cation is required as a cofactor.

It localises to the cell surface. It functions in the pathway pigment biosynthesis. Functionally, laccase; part of the Pks1 gene cluster that mediates the biosynthesis of an anthraquinone derivative pigment that contributes to conidial pigmentation that provides protection from UV radiation, heat and cold stress. The polyketide synthase Pks1 produces 1-acetyl-2,4,6,8-tetrahydroxy-9,10-anthraquinone though condensation of acetyl-CoA with malonyl-CoA. The dehydratase EthD and the laccase Mlac1 further convert the anthraquinone derivative into the final conidial pigment. The sequence is that of Laccase 1 from Metarhizium anisopliae (Entomophthora anisopliae).